Here is a 160-residue protein sequence, read N- to C-terminus: Deoxyuridine 5'-triphosphate nucleotidohydrolase (160 aa).

Residues 76–78 (RSG), Asn-89, and 93–95 (TID) contribute to the substrate site. The span at 139–149 (HTLSDTERGED) shows a compositional bias: basic and acidic residues. The disordered stretch occupies residues 139–160 (HTLSDTERGEDGFGSTGHGSHQ). Over residues 150–160 (GFGSTGHGSHQ) the composition is skewed to gly residues.

It belongs to the dUTPase family. The cofactor is Mg(2+).

It catalyses the reaction dUTP + H2O = dUMP + diphosphate + H(+). Its pathway is pyrimidine metabolism; dUMP biosynthesis; dUMP from dCTP (dUTP route): step 2/2. In terms of biological role, this enzyme is involved in nucleotide metabolism: it produces dUMP, the immediate precursor of thymidine nucleotides and it decreases the intracellular concentration of dUTP so that uracil cannot be incorporated into DNA. The chain is Deoxyuridine 5'-triphosphate nucleotidohydrolase from Beijerinckia indica subsp. indica (strain ATCC 9039 / DSM 1715 / NCIMB 8712).